The following is a 91-amino-acid chain: Acyl carrier protein (91 aa).

Positions 6–81 constitute a Carrier domain; that stretch reads EEIIAELGQI…DIVAYIQKLE (76 aa). O-(pantetheine 4'-phosphoryl)serine is present on serine 41.

The protein belongs to the acyl carrier protein (ACP) family. In terms of processing, 4'-phosphopantetheine is transferred from CoA to a specific serine of apo-ACP by AcpS. This modification is essential for activity because fatty acids are bound in thioester linkage to the sulfhydryl of the prosthetic group.

The protein localises to the cytoplasm. It participates in lipid metabolism; fatty acid biosynthesis. Carrier of the growing fatty acid chain in fatty acid biosynthesis. The chain is Acyl carrier protein from Rhodococcus erythropolis (strain PR4 / NBRC 100887).